A 496-amino-acid chain; its full sequence is Probable cytosol aminopeptidase (496 aa).

Mn(2+)-binding residues include K261 and D266. Residue K273 is part of the active site. 3 residues coordinate Mn(2+): D284, D343, and E345. The active site involves R347.

It belongs to the peptidase M17 family. Mn(2+) is required as a cofactor.

The protein resides in the cytoplasm. It catalyses the reaction Release of an N-terminal amino acid, Xaa-|-Yaa-, in which Xaa is preferably Leu, but may be other amino acids including Pro although not Arg or Lys, and Yaa may be Pro. Amino acid amides and methyl esters are also readily hydrolyzed, but rates on arylamides are exceedingly low.. It carries out the reaction Release of an N-terminal amino acid, preferentially leucine, but not glutamic or aspartic acids.. Presumably involved in the processing and regular turnover of intracellular proteins. Catalyzes the removal of unsubstituted N-terminal amino acids from various peptides. This Bacillus pumilus (strain SAFR-032) protein is Probable cytosol aminopeptidase.